The sequence spans 607 residues: Autophagy-related protein 22-2 (607 aa).

Positions methionine 1–proline 29 are disordered. Residues tyrosine 41–leucine 61 form a helical membrane-spanning segment. A glycan (N-linked (GlcNAc...) asparagine) is linked at asparagine 89. Helical transmembrane passes span serine 119–phenylalanine 139, threonine 151–isoleucine 170, and cysteine 188–proline 208. Positions serine 235–glutamate 263 are disordered. Over residues proline 247 to glutamate 263 the composition is skewed to low complexity. The next 4 membrane-spanning stretches (helical) occupy residues glycine 274–phenylalanine 294, threonine 307–valine 327, valine 379–threonine 399, and valine 415–valine 435. An N-linked (GlcNAc...) asparagine glycan is attached at asparagine 445. 4 helical membrane passes run leucine 450–phenylalanine 470, phenylalanine 485–glycine 507, tyrosine 519–isoleucine 541, and glycine 550–alanine 570. A disordered region spans residues lysine 586–isoleucine 607.

Belongs to the ATG22 family.

The protein resides in the vacuole membrane. In terms of biological role, vacuolar effluxer which mediate the efflux of amino acids resulting from autophagic degradation. The release of autophagic amino acids allows the maintenance of protein synthesis and viability during nitrogen starvation. This chain is Autophagy-related protein 22-2 (atg22-2), found in Aspergillus oryzae (strain ATCC 42149 / RIB 40) (Yellow koji mold).